The sequence spans 418 residues: AP-3 complex subunit mu-1 (418 aa).

Residues 176 to 417 (NNEAYFDVVE…VTKAGKFQVR (242 aa)) enclose the MHD domain.

The protein belongs to the adaptor complexes medium subunit family. Adaptor protein complex 3 (AP-3) is a heterotetramer composed of two large adaptins (delta-type subunit AP3D1 and beta-type subunit AP3B1 or AP3B2), a medium adaptin (mu-type subunit AP3M1 or AP3M2) and a small adaptin (sigma-type subunit APS1 or AP3S2). Interacts with AGAP1. AP-3 associates with the BLOC-1 complex. As to quaternary structure, (Microbial infection) Interacts with human respiratory virus (HRSV) matrix protein; this interaction plays an essential role in trafficking the matrix protein in host cells.

The protein resides in the golgi apparatus. The protein localises to the cytoplasmic vesicle membrane. Its function is as follows. Part of the AP-3 complex, an adaptor-related complex which is not clathrin-associated. The complex is associated with the Golgi region as well as more peripheral structures. It facilitates the budding of vesicles from the Golgi membrane and may be directly involved in trafficking to lysosomes. In concert with the BLOC-1 complex, AP-3 is required to target cargos into vesicles assembled at cell bodies for delivery into neurites and nerve terminals. This Homo sapiens (Human) protein is AP-3 complex subunit mu-1 (AP3M1).